The following is a 343-amino-acid chain: L-ornithine/L-arginine 3-hydroxylase (343 aa).

The Fe cation site is built by His-147 and Glu-149. Residues Met-199 to Asp-215 show a composition bias toward polar residues. The disordered stretch occupies residues Met-199 to Lys-218. Residue His-302 participates in Fe cation binding. 2-oxoglutarate is bound at residue Arg-316.

It belongs to the clavaminate synthase family. Requires Fe(2+) as cofactor.

The catalysed reaction is L-ornithine + 2-oxoglutarate + O2 = (3S)-3-hydroxy-L-ornithine + succinate + CO2. It catalyses the reaction L-arginine + 2-oxoglutarate + O2 = (2S,3S)-hydroxyarginine + succinate + CO2. Alpha-ketoglutarate-dependent dioxygenase that in vitro catalyzes the regio- and stereoselective hydroxylation of L-ornithine and L-arginine, leading to (3S)-3-hydroxy-L-ornithine and (3S)-3-hydroxy-L-arginine, respectively. Cannot use L-lysine, D-ornithine, or D-arginine as substrate. This is L-ornithine/L-arginine 3-hydroxylase from Catenulispora acidiphila (strain DSM 44928 / JCM 14897 / NBRC 102108 / NRRL B-24433 / ID139908).